Here is an 89-residue protein sequence, read N- to C-terminus: Small ribosomal subunit protein bS20 (89 aa).

Residues 1–29 (MTLANIKSAKKRAVQSEKRRQHNASQRSM) form a disordered region.

It belongs to the bacterial ribosomal protein bS20 family.

Its function is as follows. Binds directly to 16S ribosomal RNA. The protein is Small ribosomal subunit protein bS20 of Haemophilus influenzae (strain 86-028NP).